Consider the following 122-residue polypeptide: Large ribosomal subunit protein uL29 (122 aa).

A Phosphoserine modification is found at Ser12.

The protein belongs to the universal ribosomal protein uL29 family. In terms of assembly, component of the large ribosomal subunit (LSU). Mature yeast ribosomes consist of a small (40S) and a large (60S) subunit. The 40S small subunit contains 1 molecule of ribosomal RNA (18S rRNA) and at least 33 different proteins. The large 60S subunit contains 3 rRNA molecules (25S, 5.8S and 5S rRNA) and at least 46 different proteins. uL29 is associated with the polypeptide exit tunnel.

It is found in the cytoplasm. The protein resides in the nucleus. Its subcellular location is the nucleolus. In terms of biological role, component of the ribosome, a large ribonucleoprotein complex responsible for the synthesis of proteins in the cell. The small ribosomal subunit (SSU) binds messenger RNAs (mRNAs) and translates the encoded message by selecting cognate aminoacyl-transfer RNA (tRNA) molecules. The large subunit (LSU) contains the ribosomal catalytic site termed the peptidyl transferase center (PTC), which catalyzes the formation of peptide bonds, thereby polymerizing the amino acids delivered by tRNAs into a polypeptide chain. The nascent polypeptides leave the ribosome through a tunnel in the LSU and interact with protein factors that function in enzymatic processing, targeting, and the membrane insertion of nascent chains at the exit of the ribosomal tunnel. This Schizosaccharomyces pombe (strain 972 / ATCC 24843) (Fission yeast) protein is Large ribosomal subunit protein uL29 (rpl35).